We begin with the raw amino-acid sequence, 728 residues long: Catalase-peroxidase 2 (728 aa).

A disordered region spans residues 1–20 (MSNEGKCPFNHGKRNGTTNR). Residues 91-214 (WHSAGTYRTG…LAAVQMGLIY (124 aa)) constitute a cross-link (tryptophyl-tyrosyl-methioninium (Trp-Tyr) (with M-240)). Catalysis depends on histidine 92, which acts as the Proton acceptor. Positions 214 to 240 (YVNPEGPNGNPDPLASARDIRETFARM) form a cross-link, tryptophyl-tyrosyl-methioninium (Tyr-Met) (with W-91). Histidine 255 is a binding site for heme b. The disordered stretch occupies residues 335-355 (AHQWQPKGGAGADSVPDPFEP).

It belongs to the peroxidase family. Peroxidase/catalase subfamily. Homodimer or homotetramer. Requires heme b as cofactor. In terms of processing, formation of the three residue Trp-Tyr-Met cross-link is important for the catalase, but not the peroxidase activity of the enzyme.

It catalyses the reaction H2O2 + AH2 = A + 2 H2O. It carries out the reaction 2 H2O2 = O2 + 2 H2O. Functionally, bifunctional enzyme with both catalase and broad-spectrum peroxidase activity. The polypeptide is Catalase-peroxidase 2 (Burkholderia cenocepacia (strain HI2424)).